A 189-amino-acid chain; its full sequence is Threonylcarbamoyl-AMP synthase (189 aa).

In terms of domain architecture, YrdC-like spans 3–189; sequence TTSVTEAAEC…NALTGEVIRP (187 aa).

It belongs to the SUA5 family. TsaC subfamily.

The protein localises to the cytoplasm. It catalyses the reaction L-threonine + hydrogencarbonate + ATP = L-threonylcarbamoyladenylate + diphosphate + H2O. Required for the formation of a threonylcarbamoyl group on adenosine at position 37 (t(6)A37) in tRNAs that read codons beginning with adenine. Catalyzes the conversion of L-threonine, HCO(3)(-)/CO(2) and ATP to give threonylcarbamoyl-AMP (TC-AMP) as the acyladenylate intermediate, with the release of diphosphate. This chain is Threonylcarbamoyl-AMP synthase, found in Acinetobacter baumannii (strain ACICU).